A 131-amino-acid polypeptide reads, in one-letter code: Ribosome-binding factor A (131 aa).

It belongs to the RbfA family. In terms of assembly, monomer. Binds 30S ribosomal subunits, but not 50S ribosomal subunits or 70S ribosomes.

Its subcellular location is the cytoplasm. One of several proteins that assist in the late maturation steps of the functional core of the 30S ribosomal subunit. Associates with free 30S ribosomal subunits (but not with 30S subunits that are part of 70S ribosomes or polysomes). Required for efficient processing of 16S rRNA. May interact with the 5'-terminal helix region of 16S rRNA. This is Ribosome-binding factor A from Picosynechococcus sp. (strain ATCC 27264 / PCC 7002 / PR-6) (Agmenellum quadruplicatum).